A 116-amino-acid polypeptide reads, in one-letter code: MKLCVLTIATLLVTATSLETQKEIAEGNELTREETPSLVEHKEDEAAAASEKRSCIEEWKTCENSCECCGSSTICSSTWAEGKEIKLCKNEGGTFKKVLHFIQKGISKLKSCKEGN.

Residues 1 to 17 (MKLCVLTIATLLVTATS) form the signal peptide. The propeptide occupies 18 to 53 (LETQKEIAEGNELTREETPSLVEHKEDEAAAASEKR). The disordered stretch occupies residues 25-45 (AEGNELTREETPSLVEHKEDE). 4 disulfides stabilise this stretch: Cys-55–Cys-69, Cys-62–Cys-75, Cys-66–Cys-112, and Cys-68–Cys-88.

This sequence belongs to the neurotoxin 03 (Tx2) family. 02 subfamily. As to expression, expressed by the venom gland.

The protein localises to the secreted. Its function is as follows. Probable ion channel inhibitor. In Chilobrachys guangxiensis (Chinese earth tiger tarantula), this protein is U30-theraphotoxin-Cg1b.